The following is a 127-amino-acid chain: Holo-[acyl-carrier-protein] synthase (127 aa).

Asp9 and Glu58 together coordinate Mg(2+).

This sequence belongs to the P-Pant transferase superfamily. AcpS family. Mg(2+) is required as a cofactor.

It is found in the cytoplasm. The catalysed reaction is apo-[ACP] + CoA = holo-[ACP] + adenosine 3',5'-bisphosphate + H(+). In terms of biological role, transfers the 4'-phosphopantetheine moiety from coenzyme A to a Ser of acyl-carrier-protein. The sequence is that of Holo-[acyl-carrier-protein] synthase from Shewanella sp. (strain MR-4).